Here is a 221-residue protein sequence, read N- to C-terminus: Translation initiation factor 6 (221 aa).

The protein belongs to the eIF-6 family.

Its function is as follows. Binds to the 50S ribosomal subunit and prevents its association with the 30S ribosomal subunit to form the 70S initiation complex. The sequence is that of Translation initiation factor 6 from Methanospirillum hungatei JF-1 (strain ATCC 27890 / DSM 864 / NBRC 100397 / JF-1).